The chain runs to 230 residues: Type 4 apparatus protein DotY (230 aa).

The segment at 202-230 is disordered; the sequence is EPKALETKREEIRQEIESGAEAPTTQSIR. The segment covering 204–217 has biased composition (basic and acidic residues); that stretch reads KALETKREEIRQEI.

The T4BSS is a complex nanomachine composed of several subcomplexes. This subunit is part of the Type IV Coupling Complex (T4CC), a subcomplex composed of the DotLMNYZ core and the IcmSW-LvgA adapter subunits, linked by the C-terminal tail of DotL. Six DotLMNYZ hetero-pentameric units may assemble into a hexameric nanomachine, forming an inner membrane channel for effectors to pass through. Interacts exclusively with DotZ. DotY and DotZ are co-dependent for the assembly into the T4CC.

It localises to the cytoplasm. Functionally, component of the Dot/Icm type IVB secretion system (T4BSS), which is used to inject bacterial effector proteins into eukaryotic host cells. Part of a subcomplex which recruits effector proteins and delivers them to the core transmembrane subcomplex. DotY and DotZ play a role in effector translocation, but are not essential and do not influence the stability of the subcomplex main components. The DotY/DotZ main function is to optimize secretion by modulating the delivery trajectory of the IcmSW module and the localization of the machinery to the poles. This chain is Type 4 apparatus protein DotY, found in Legionella pneumophila subsp. pneumophila (strain Philadelphia 1 / ATCC 33152 / DSM 7513).